Consider the following 483-residue polypeptide: Aspartyl/glutamyl-tRNA(Asn/Gln) amidotransferase subunit B (483 aa).

This sequence belongs to the GatB/GatE family. GatB subfamily. Heterotrimer of A, B and C subunits.

The enzyme catalyses L-glutamyl-tRNA(Gln) + L-glutamine + ATP + H2O = L-glutaminyl-tRNA(Gln) + L-glutamate + ADP + phosphate + H(+). It carries out the reaction L-aspartyl-tRNA(Asn) + L-glutamine + ATP + H2O = L-asparaginyl-tRNA(Asn) + L-glutamate + ADP + phosphate + 2 H(+). In terms of biological role, allows the formation of correctly charged Asn-tRNA(Asn) or Gln-tRNA(Gln) through the transamidation of misacylated Asp-tRNA(Asn) or Glu-tRNA(Gln) in organisms which lack either or both of asparaginyl-tRNA or glutaminyl-tRNA synthetases. The reaction takes place in the presence of glutamine and ATP through an activated phospho-Asp-tRNA(Asn) or phospho-Glu-tRNA(Gln). In Rickettsia bellii (strain RML369-C), this protein is Aspartyl/glutamyl-tRNA(Asn/Gln) amidotransferase subunit B.